The primary structure comprises 226 residues: Neuron-specific vesicular protein calcyon (226 aa).

Residues 1–23 are disordered; the sequence is MVKLGCSFSGKPGKETGDQDGAA. The Extracellular segment spans residues 1–88; sequence MVKLGCSFSG…EEGRRLPTAR (88 aa). The chain crosses the membrane as a helical span at residues 89 to 109; it reads MIAFAMALLGCVLIMYKAIWY. Topologically, residues 110-226 are cytoplasmic; sequence DQFTCPDGFL…AEDVPSQSPK (117 aa). The segment at 189–226 is disordered; it reads TAAAAAAAEGNEPSGKPLDMREKEDPQKAEDVPSQSPK. The segment covering 206-219 has biased composition (basic and acidic residues); the sequence is LDMREKEDPQKAED.

Belongs to the NSG family. In terms of assembly, interacts with CLTA. Expressed exclusively in neurons (at protein level). In all age groups, expressed at significantly higher levels in the medial prefrontal and orbital frontal cortices of spontaneously hypertensive rats (SHR), a model of attention deficit-hyperactivity disorder, than Wistar Kyoto (WKY) animals. In the motor cortex, dorsal striatum and nucleus accumbens, expression is significantly elevated in SHR only in younger animals.

It localises to the cytoplasmic vesicle membrane. The protein localises to the cell membrane. In terms of biological role, interacts with clathrin light chain A and stimulates clathrin self-assembly and clathrin-mediated endocytosis. The sequence is that of Neuron-specific vesicular protein calcyon (Caly) from Rattus norvegicus (Rat).